We begin with the raw amino-acid sequence, 322 residues long: N-acetyl-gamma-glutamyl-phosphate reductase 2 (322 aa).

Residue C117 is part of the active site.

This sequence belongs to the NAGSA dehydrogenase family. Type 2 subfamily.

The protein localises to the cytoplasm. The enzyme catalyses N-acetyl-L-glutamate 5-semialdehyde + phosphate + NADP(+) = N-acetyl-L-glutamyl 5-phosphate + NADPH + H(+). Its pathway is amino-acid biosynthesis; L-arginine biosynthesis; N(2)-acetyl-L-ornithine from L-glutamate: step 3/4. Catalyzes the NADPH-dependent reduction of N-acetyl-5-glutamyl phosphate to yield N-acetyl-L-glutamate 5-semialdehyde. This Nostoc sp. (strain PCC 7120 / SAG 25.82 / UTEX 2576) protein is N-acetyl-gamma-glutamyl-phosphate reductase 2.